The primary structure comprises 378 residues: Queuine tRNA-ribosyltransferase (378 aa).

Aspartate 90 (proton acceptor) is an active-site residue. Substrate-binding positions include 90–94 (DSGGY), aspartate 152, glutamine 194, and glycine 223. The segment at 254 to 260 (GVGKPED) is RNA binding. The active-site Nucleophile is aspartate 273. An RNA binding; important for wobble base 34 recognition region spans residues 278–282 (TRNAR). Zn(2+) contacts are provided by cysteine 311, cysteine 313, cysteine 316, and histidine 342.

Belongs to the queuine tRNA-ribosyltransferase family. In terms of assembly, homodimer. Within each dimer, one monomer is responsible for RNA recognition and catalysis, while the other monomer binds to the replacement base PreQ1. Requires Zn(2+) as cofactor.

The enzyme catalyses 7-aminomethyl-7-carbaguanine + guanosine(34) in tRNA = 7-aminomethyl-7-carbaguanosine(34) in tRNA + guanine. The protein operates within tRNA modification; tRNA-queuosine biosynthesis. Its function is as follows. Catalyzes the base-exchange of a guanine (G) residue with the queuine precursor 7-aminomethyl-7-deazaguanine (PreQ1) at position 34 (anticodon wobble position) in tRNAs with GU(N) anticodons (tRNA-Asp, -Asn, -His and -Tyr). Catalysis occurs through a double-displacement mechanism. The nucleophile active site attacks the C1' of nucleotide 34 to detach the guanine base from the RNA, forming a covalent enzyme-RNA intermediate. The proton acceptor active site deprotonates the incoming PreQ1, allowing a nucleophilic attack on the C1' of the ribose to form the product. After dissociation, two additional enzymatic reactions on the tRNA convert PreQ1 to queuine (Q), resulting in the hypermodified nucleoside queuosine (7-(((4,5-cis-dihydroxy-2-cyclopenten-1-yl)amino)methyl)-7-deazaguanosine). This Aquifex aeolicus (strain VF5) protein is Queuine tRNA-ribosyltransferase.